We begin with the raw amino-acid sequence, 174 residues long: Repair DNA polymerase X (174 aa).

An involved in ssDNA binding region spans residues 42 to 51 (REEKMLNDVD). Positions 49 and 51 each coordinate Mg(2+). C81 and C86 form a disulfide bridge. Residue D100 participates in Mg(2+) binding.

It belongs to the DNA polymerase type-X family. The cofactor is Mg(2+).

The protein resides in the virion. It carries out the reaction DNA(n) + a 2'-deoxyribonucleoside 5'-triphosphate = DNA(n+1) + diphosphate. Functionally, error-prone polymerase lacking a proofreading 3'-5' exonuclease which catalyzes the gap-filling reaction during the DNA repair process. Specifically binds intermediates in the single-nucleotide base-excision repair process. Also catalyzes DNA polymerization with low nucleotide-insertion fidelity. Probably acts as a strategic DNA mutase, which gives rise to a rapid emergence of variants. Generates mismatched G-G pairs, in that case, the polymerase first binds the deoxynucleotide followed by mismatch formation. Together with the viral DNA ligase, fills the single nucleotide gaps generated by the AP endonuclease. Binds DNA with high affinity via the helix alphaE. The protein is Repair DNA polymerase X of African swine fever virus (isolate Tick/Malawi/Lil 20-1/1983) (ASFV).